Here is a 326-residue protein sequence, read N- to C-terminus: tRNA-dihydrouridine(16) synthase (326 aa).

FMN-binding positions include 8–10 (PME) and Gln-69. Catalysis depends on Cys-99, which acts as the Proton donor. FMN-binding positions include Lys-140, 200–202 (NGE), and 224–225 (GR).

It belongs to the Dus family. DusC subfamily. FMN is required as a cofactor.

The enzyme catalyses 5,6-dihydrouridine(16) in tRNA + NADP(+) = uridine(16) in tRNA + NADPH + H(+). The catalysed reaction is 5,6-dihydrouridine(16) in tRNA + NAD(+) = uridine(16) in tRNA + NADH + H(+). Its function is as follows. Catalyzes the synthesis of 5,6-dihydrouridine (D), a modified base found in the D-loop of most tRNAs, via the reduction of the C5-C6 double bond in target uridines. Specifically modifies U16 in tRNAs. This chain is tRNA-dihydrouridine(16) synthase, found in Ralstonia nicotianae (strain ATCC BAA-1114 / GMI1000) (Ralstonia solanacearum).